Here is a 175-residue protein sequence, read N- to C-terminus: Bifunctional protein PyrR (175 aa).

Substrate-binding positions include 40 to 41 (TR), 102 to 110 (DDVLYTGRT), R135, and V159. A PRPP-binding motif is present at residues 98–110 (VIIIDDVLYTGRT).

This sequence belongs to the purine/pyrimidine phosphoribosyltransferase family. PyrR subfamily. In terms of assembly, homodimer and homohexamer; in equilibrium.

It catalyses the reaction UMP + diphosphate = 5-phospho-alpha-D-ribose 1-diphosphate + uracil. Regulates transcriptional attenuation of the pyrimidine nucleotide (pyr) operon by binding in a uridine-dependent manner to specific sites on pyr mRNA. This disrupts an antiterminator hairpin in the RNA and favors formation of a downstream transcription terminator, leading to a reduced expression of downstream genes. In terms of biological role, also displays a weak uracil phosphoribosyltransferase activity which is not physiologically significant. The protein is Bifunctional protein PyrR of Staphylococcus haemolyticus (strain JCSC1435).